A 129-amino-acid polypeptide reads, in one-letter code: L-ectoine synthase (129 aa).

It belongs to the ectoine synthase family.

It catalyses the reaction (2S)-4-acetamido-2-aminobutanoate = L-ectoine + H2O. Its pathway is amine and polyamine biosynthesis; ectoine biosynthesis; L-ectoine from L-aspartate 4-semialdehyde: step 3/3. Functionally, catalyzes the circularization of gamma-N-acetyl-alpha,gamma-diaminobutyric acid (ADABA) to ectoine (1,4,5,6-tetrahydro-2-methyl-4-pyrimidine carboxylic acid), which is an excellent osmoprotectant. The chain is L-ectoine synthase from Mycobacterium sp. (strain KMS).